The primary structure comprises 138 residues: Large ribosomal subunit protein uL16c (138 aa).

Belongs to the universal ribosomal protein uL16 family. As to quaternary structure, part of the 50S ribosomal subunit.

It localises to the plastid. The protein resides in the chloroplast. This chain is Large ribosomal subunit protein uL16c, found in Physcomitrium patens (Spreading-leaved earth moss).